The primary structure comprises 260 residues: Proteasome subunit alpha 1 (260 aa).

The interval 237 to 260 (AEADLLDTGEDADDEAEDEDATEE) is disordered. The segment covering 240-260 (DLLDTGEDADDEAEDEDATEE) has biased composition (acidic residues).

Belongs to the peptidase T1A family. The 20S proteasome core is composed of 14 alpha and 14 beta subunits that assemble into four stacked heptameric rings, resulting in a barrel-shaped structure. The two inner rings, each composed of seven catalytic beta subunits, are sandwiched by two outer rings, each composed of seven alpha subunits. The catalytic chamber with the active sites is on the inside of the barrel. Has a gated structure, the ends of the cylinder being occluded by the N-termini of the alpha-subunits. Is capped at one or both ends by the proteasome regulatory ATPase, PAN.

The protein localises to the cytoplasm. Its activity is regulated as follows. The formation of the proteasomal ATPase PAN-20S proteasome complex, via the docking of the C-termini of PAN into the intersubunit pockets in the alpha-rings, triggers opening of the gate for substrate entry. Interconversion between the open-gate and close-gate conformations leads to a dynamic regulation of the 20S proteasome proteolysis activity. Its function is as follows. Component of the proteasome core, a large protease complex with broad specificity involved in protein degradation. This Haloarcula marismortui (strain ATCC 43049 / DSM 3752 / JCM 8966 / VKM B-1809) (Halobacterium marismortui) protein is Proteasome subunit alpha 1.